We begin with the raw amino-acid sequence, 104 residues long: Pyrimidine/purine nucleoside phosphorylase (104 aa).

It belongs to the nucleoside phosphorylase PpnP family.

It catalyses the reaction a purine D-ribonucleoside + phosphate = a purine nucleobase + alpha-D-ribose 1-phosphate. It carries out the reaction adenosine + phosphate = alpha-D-ribose 1-phosphate + adenine. The enzyme catalyses cytidine + phosphate = cytosine + alpha-D-ribose 1-phosphate. The catalysed reaction is guanosine + phosphate = alpha-D-ribose 1-phosphate + guanine. It catalyses the reaction inosine + phosphate = alpha-D-ribose 1-phosphate + hypoxanthine. It carries out the reaction thymidine + phosphate = 2-deoxy-alpha-D-ribose 1-phosphate + thymine. The enzyme catalyses uridine + phosphate = alpha-D-ribose 1-phosphate + uracil. The catalysed reaction is xanthosine + phosphate = alpha-D-ribose 1-phosphate + xanthine. Its function is as follows. Catalyzes the phosphorolysis of diverse nucleosides, yielding D-ribose 1-phosphate and the respective free bases. Can use uridine, adenosine, guanosine, cytidine, thymidine, inosine and xanthosine as substrates. Also catalyzes the reverse reactions. This is Pyrimidine/purine nucleoside phosphorylase from Herminiimonas arsenicoxydans.